Reading from the N-terminus, the 420-residue chain is Enolase (420 aa).

Gln-162 is a binding site for (2R)-2-phosphoglycerate. Glu-206 (proton donor) is an active-site residue. Mg(2+)-binding residues include Asp-241, Glu-282, and Asp-308. 4 residues coordinate (2R)-2-phosphoglycerate: Lys-333, Arg-362, Ser-363, and Lys-384. Lys-333 functions as the Proton acceptor in the catalytic mechanism.

It belongs to the enolase family. Requires Mg(2+) as cofactor.

The protein resides in the cytoplasm. It is found in the secreted. It localises to the cell surface. It catalyses the reaction (2R)-2-phosphoglycerate = phosphoenolpyruvate + H2O. Its pathway is carbohydrate degradation; glycolysis; pyruvate from D-glyceraldehyde 3-phosphate: step 4/5. Functionally, catalyzes the reversible conversion of 2-phosphoglycerate (2-PG) into phosphoenolpyruvate (PEP). It is essential for the degradation of carbohydrates via glycolysis. In Methanothrix thermoacetophila (strain DSM 6194 / JCM 14653 / NBRC 101360 / PT) (Methanosaeta thermophila), this protein is Enolase.